Reading from the N-terminus, the 58-residue chain is ATP synthase F(0) complex subunit k, mitochondrial (58 aa).

Residues lysine 16 and lysine 17 each carry the N6-acetyllysine modification. A helical transmembrane segment spans residues 23–45 (TLTGRMNCVLATYGSIALIVLYF).

In terms of assembly, component of the ATP synthase complex composed at least of ATP5F1A/subunit alpha, ATP5F1B/subunit beta, ATP5MC1/subunit c (homooctomer), MT-ATP6/subunit a, MT-ATP8/subunit 8, ATP5ME/subunit e, ATP5MF/subunit f, ATP5MG/subunit g, ATP5MK/subunit k, ATP5MJ/subunit j, ATP5F1C/subunit gamma, ATP5F1D/subunit delta, ATP5F1E/subunit epsilon, ATP5PF/subunit F6, ATP5PB/subunit b, ATP5PD/subunit d, ATP5PO/subunit OSCP. ATP synthase complex consists of a soluble F(1) head domain (subunits alpha(3) and beta(3)) - the catalytic core - and a membrane F(0) domain - the membrane proton channel (subunits c, a, 8, e, f, g, k and j). These two domains are linked by a central stalk (subunits gamma, delta, and epsilon) rotating inside the F1 region and a stationary peripheral stalk (subunits F6, b, d, and OSCP). The ATP synthase complex/complex V exists as a monomeric and a dimeric supercomplex that helps shape mitochondrial cristae to optimize proton flow.

The protein resides in the mitochondrion membrane. Functionally, subunit k, of the mitochondrial membrane ATP synthase complex (F(1)F(0) ATP synthase or Complex V) that produces ATP from ADP in the presence of a proton gradient across the membrane which is generated by electron transport complexes of the respiratory chain. ATP synthase complex consist of a soluble F(1) head domain - the catalytic core - and a membrane F(1) domain - the membrane proton channel. These two domains are linked by a central stalk rotating inside the F(1) region and a stationary peripheral stalk. During catalysis, ATP synthesis in the catalytic domain of F(1) is coupled via a rotary mechanism of the central stalk subunits to proton translocation. In vivo, can only synthesize ATP although its ATP hydrolase activity can be activated artificially in vitro. Part of the complex F(0) domain. Required for dimerization of the ATP synthase complex and as such regulates ATP synthesis in the mitochondria. This is ATP synthase F(0) complex subunit k, mitochondrial from Homo sapiens (Human).